The primary structure comprises 512 residues: 2-isopropylmalate synthase (512 aa).

The Pyruvate carboxyltransferase domain maps to leucine 5 to valine 268. Residues aspartate 14, histidine 202, histidine 204, and asparagine 239 each contribute to the Mn(2+) site. The segment at alanine 394 to glycine 512 is regulatory domain.

The protein belongs to the alpha-IPM synthase/homocitrate synthase family. LeuA type 1 subfamily. Homodimer. Mn(2+) is required as a cofactor.

The protein localises to the cytoplasm. It catalyses the reaction 3-methyl-2-oxobutanoate + acetyl-CoA + H2O = (2S)-2-isopropylmalate + CoA + H(+). The protein operates within amino-acid biosynthesis; L-leucine biosynthesis; L-leucine from 3-methyl-2-oxobutanoate: step 1/4. In terms of biological role, catalyzes the condensation of the acetyl group of acetyl-CoA with 3-methyl-2-oxobutanoate (2-ketoisovalerate) to form 3-carboxy-3-hydroxy-4-methylpentanoate (2-isopropylmalate). This Variovorax paradoxus (strain S110) protein is 2-isopropylmalate synthase.